We begin with the raw amino-acid sequence, 322 residues long: Putative HTH-type transcriptional regulatory protein rrnAC2519 (322 aa).

The 58-residue stretch at Leu132–Leu189 folds into the HTH cro/C1-type domain. Residues Leu143–Asp162 constitute a DNA-binding region (H-T-H motif).

The polypeptide is Putative HTH-type transcriptional regulatory protein rrnAC2519 (Haloarcula marismortui (strain ATCC 43049 / DSM 3752 / JCM 8966 / VKM B-1809) (Halobacterium marismortui)).